A 145-amino-acid polypeptide reads, in one-letter code: Superoxide dismutase [Mn/Fe] (145 aa).

Fe(3+)-binding residues include histidine 10 and histidine 64. Mn(2+) contacts are provided by histidine 10 and histidine 64.

It belongs to the iron/manganese superoxide dismutase family. The cofactor is Mn(2+). Fe(3+) is required as a cofactor.

It catalyses the reaction 2 superoxide + 2 H(+) = H2O2 + O2. In terms of biological role, destroys superoxide anion radicals which are normally produced within the cells and which are toxic to biological systems. Catalyzes the dismutation of superoxide anion radicals into O2 and H2O2 by successive reduction and oxidation of the transition metal ion at the active site. This is Superoxide dismutase [Mn/Fe] (sodA) from Streptococcus canis.